Consider the following 173-residue polypeptide: Photosystem I assembly protein Ycf3 (173 aa).

3 TPR repeats span residues 35 to 68 (AYIY…EENA), 72 to 105 (GETL…NPKQ), and 120 to 153 (GRAL…YPGG).

This sequence belongs to the Ycf3 family.

It localises to the cellular thylakoid membrane. Essential for the assembly of the photosystem I (PSI) complex. May act as a chaperone-like factor to guide the assembly of the PSI subunits. The sequence is that of Photosystem I assembly protein Ycf3 from Prochlorococcus marinus (strain SARG / CCMP1375 / SS120).